A 476-amino-acid polypeptide reads, in one-letter code: uncharacterized protein (476 aa).

The next 10 helical transmembrane spans lie at 4-24 (FFSFINSVLWGSVMIYLLFGA), 81-101 (ALAITAGGPGAVFWMWVAAFI), 141-161 (WMGVLFAVFLLIAYGIIFSGV), 174-194 (FDFPPLVTGIILAVFTLLAIT), 207-227 (FVPLMAIIWVLTSLVICVMNI), 233-253 (VIWSIFESAFGWQEAAGGAAG), 300-320 (MIGIFIDTLVICTASAMLILL), 351-371 (FVTLVVILFAFSSIVANYIYA), 391-411 (ICTFATVIGGTLLSLPLMWQL), and 414-434 (IIMACMAITNLTAILLLSPVV).

Belongs to the alanine or glycine:cation symporter (AGCS) (TC 2.A.25) family.

The protein resides in the cell inner membrane. This is an uncharacterized protein from Escherichia coli (strain K12).